The following is a 249-amino-acid chain: Ribonuclease PH (249 aa).

Residues Arg90 and 128 to 130 (GTR) each bind phosphate.

The protein belongs to the RNase PH family. In terms of assembly, homohexameric ring arranged as a trimer of dimers.

It catalyses the reaction tRNA(n+1) + phosphate = tRNA(n) + a ribonucleoside 5'-diphosphate. Its function is as follows. Phosphorolytic 3'-5' exoribonuclease that plays an important role in tRNA 3'-end maturation. Removes nucleotide residues following the 3'-CCA terminus of tRNAs; can also add nucleotides to the ends of RNA molecules by using nucleoside diphosphates as substrates, but this may not be physiologically important. Probably plays a role in initiation of 16S rRNA degradation (leading to ribosome degradation) during starvation. This is Ribonuclease PH from Parasynechococcus marenigrum (strain WH8102).